The chain runs to 194 residues: Probable GTP-binding protein EngB (194 aa).

The 173-residue stretch at 22-194 (DLPEYALAGR…AWQFIKEGME (173 aa)) folds into the EngB-type G domain. Residues 30–37 (GRSNVGKS), 57–61 (GKTQT), 75–78 (DVPG), 142–145 (TKAD), and 174–176 (FSS) contribute to the GTP site. Mg(2+) contacts are provided by S37 and T59.

It belongs to the TRAFAC class TrmE-Era-EngA-EngB-Septin-like GTPase superfamily. EngB GTPase family. Mg(2+) is required as a cofactor.

Its function is as follows. Necessary for normal cell division and for the maintenance of normal septation. The protein is Probable GTP-binding protein EngB of Listeria welshimeri serovar 6b (strain ATCC 35897 / DSM 20650 / CCUG 15529 / CIP 8149 / NCTC 11857 / SLCC 5334 / V8).